Here is a 59-residue protein sequence, read N- to C-terminus: Large ribosomal subunit protein bL32 (59 aa).

Residues 35-59 (EAHLRHHISPNGYYRGRKVVKTKND) form a disordered region. Residues 49 to 59 (RGRKVVKTKND) show a composition bias toward basic residues.

It belongs to the bacterial ribosomal protein bL32 family.

The chain is Large ribosomal subunit protein bL32 from Polynucleobacter asymbioticus (strain DSM 18221 / CIP 109841 / QLW-P1DMWA-1) (Polynucleobacter necessarius subsp. asymbioticus).